The chain runs to 224 residues: Redox-sensing transcriptional repressor Rex (224 aa).

The H-T-H motif DNA-binding region spans 17-56 (RYHRYLEELLKNDVKRISSRELSEKMGVTASQIRQDLNNF). 91–96 (GAGNLG) lines the NAD(+) pocket.

This sequence belongs to the transcriptional regulatory Rex family. As to quaternary structure, homodimer.

It is found in the cytoplasm. Functionally, modulates transcription in response to changes in cellular NADH/NAD(+) redox state. The polypeptide is Redox-sensing transcriptional repressor Rex (Thermoanaerobacter pseudethanolicus (strain ATCC 33223 / 39E) (Clostridium thermohydrosulfuricum)).